Here is a 1874-residue protein sequence, read N- to C-terminus: MAGGSGARETRCRQGSRPGSPGSEVPAASVTGPRAEARPAGGGGGSRRAAPDRCSGGVPSAAWQHPFLNVFRHFRVDEWKRSSKEGDVAVVTDKVLKSAVYRIRGSVSASNYIQLPRTSTQSLGLTGRYLYVLFRPVPTKHFVIHLDVSTEDGQVIRVSFSNLFKEFKSSTTWLQFPFVFETKTPRRDLAGVALPRARWTCLQLDLRDILMFYLGRHYSHLKSIRLCASLLVRNLYTSDLCFDPAVTVTEARRAKLSVNPMPREMAFPVPKGESWHDNYIHVRFPSDCSKVPDEQDEKSCSPPEAVFLGRMSRHLPHPGVLGKPLLSSKSPVAQACSSALPCQVLSASSRLPEVSRTYRYREVSSVSASSIQSQRPSVRDEVPDAHTVSGERHVLADRSSGVPMALEDIGSCRLFLPDPVLRLKGVIGFGGHSTQWALWTKDGVAVVYPCHAVIIVLQIDTGQQRFFLGHTDKVSALALNGSDTLLASAQVQPPSMVRLWDFQTGSCLSLFRSPLHTICSLSFSGSGALLCGVGKDRHGRTVVVAWSTEQAGLGGEVVVLAKVHTDFDIRAFQVAFFDETRMASCGRGSVRLWRLRGGVLRSCAVDLGEYCSLELTDLAFAQALDGHCAPSAGTLFVCSHSGHILEIDHQRMSVQHVRRLLPARSPGAPLAEKQNFSVGSGIAISSLSVSTATCAVGSEDGYLRLWPLDFSSVLLEAEHDGPVSSVSFSPDGLRVLSTTTSGHLGFLDVPSREYTVLARSHMAPVLALSTEPNRGQMATVSLDHTVRIWDLATLQQLYDFSSSEDTPCAVAFHPTMPNFFCGFSSGAVRSFSLESSGVLVEHTRHRGAITSLVITLDGRFLFSSCSQGSLVQYSCADSQCCVLRVAANMVCQDGRPNPNILAVSGDSCRLAFVGPSKCMVTIVESASLDELLRVDVSTLNLASNHLDWAVAICFSPGNSGHLLVSTSSNKVVVLDAVSGHTLRELSSVRSRACCSLALSEDAHLLLAATDRTITVWDYPTQANPSCQVYIGHSEPVHAVAFTPDQLQVISVGDAIFLWDILATPERDGGDHEAPPGHEAGSSSGQLDDLASGASGLPRQQVPIPFQALPPPLSSHDRLLDGSTGTFSTSDEEGLCEENHVSEALLQGQAPTPHVLVDREASGAGDAPRETAGSSWTPAERPSPHSHMSEWSLRSGKAGLPTRPDSYKHFTPRYKTSPRVKSVYFPPIGRERLRLKAIVGYNGNGRANMVWRPDTGFFAYTCGRLVVVEDLHSGTQRHWLGHSQEISTLALNQDGQILASASCCGNTAARCQIRIWDVPKGLCRHLLSHHDTAVQALAFSPDDEFLVTLGDYADRNLALWSMATYELLSSTRLLEPVHGVAFNPWDANELICVGTNAITFWLLQHHGADTCFQVHREPIPEELGASELTSLCYGASPLLYCGSSSGQVCVWDTGTGHCFLAWEADDGEIGVLLCSGSRLISGSNTKRLRLWAVGVVPELRRKGSSARSSSVFMERELTLDGAVVSASFDSGMDMGVVGTTAGTIWYISWTEGTSTRLISGHRTKVNEVVFSPGESHCATCGEDGSVRVWSLASMELVIQFQVLNQSCLCLAWTPPSCELPEQQQVVAGYSDGTLRVFSISRTAMELKMHPHRTALTAIAFSTDGQTILSGDKDGLVAISHPCTGMTFRVLSDHRGAPISAIQSTSKEYGDLGVEGVELWLAASGDQRVSIWVSDWLRDRCELLEWLSFPAPAVSEAPGLLPPSLAAFCPWDKAILVCVGLGAHEEVIFYSLRQKQVIQKTPLPFFAMSLSLSPGSQLMVVGFAECMMRLLDCASGTAQDLEGHDDSVHLCRFTPSGRLLFTAAHNEILVWEVTDP.

Residues 1–59 (MAGGSGARETRCRQGSRPGSPGSEVPAASVTGPRAEARPAGGGGGSRRAAPDRCSGGVP) form a disordered region. Residues serine 16 and serine 20 each carry the phosphoserine modification. Positions 59 to 267 (PSAAWQHPFL…VNPMPREMAF (209 aa)) are binds with microtubules. At serine 301 the chain carries Phosphoserine. WD repeat units follow at residues 469–512 (GHTD…SLFR), 514–556 (PLHT…LGGE), 563–603 (VHTD…LRSC), 677–716 (SVGS…VLLE), 718–757 (EHDG…YTVL), 760–799 (SHMA…QLYD), 844–883 (RHRG…CCVL), 944–984 (NHLD…TLRE), 988–1026 (VRSR…NPSC), and 1031–1068 (GHSE…ERDG). Over residues 1066 to 1075 (RDGGDHEAPP) the composition is skewed to basic and acidic residues. Disordered stretches follow at residues 1066–1132 (RDGG…SDEE) and 1160–1211 (ASGA…HFTP). 11 WD repeats span residues 1280–1325 (GHSQ…CRHL), 1328–1369 (HHDT…LLSS), 1371–1412 (RLLE…TCFQ), 1422–1460 (LGAS…CFLA), 1462–1500 (EADD…ELRR), 1559–1598 (GHRT…LVIQ), 1601–1646 (VLNQ…MELK), 1649–1688 (PHRT…TFRV), 1695–1740 (APIS…DRCE), 1800–1839 (PLPF…AQDL), and 1841–1874 (GHDD…VTDP).

The protein belongs to the WD repeat WDR90/POC16 family.

The protein resides in the cytoplasm. The protein localises to the cytoskeleton. It localises to the microtubule organizing center. Its subcellular location is the centrosome. It is found in the centriole. The protein resides in the centriolar satellite. Microtubule-binding protein that plays a crucial role in ensuring inner core protein localization within the centriole core, as well as in maintaining the microtubule wall integrity and the overall centriole roundness and stability. Required for efficient primary cilium formation. The polypeptide is WD repeat-containing protein 90 (Wdr90) (Mus musculus (Mouse)).